The sequence spans 335 residues: Glycerol-3-phosphate dehydrogenase [NAD(P)+] (335 aa).

Residues Ser12, Trp13, Arg33, Arg34, and Lys107 each coordinate NADPH. Lys107, Gly134, and Ser136 together coordinate sn-glycerol 3-phosphate. Ala138 contacts NADPH. Lys189, Asp242, Ser252, Arg253, and Asn254 together coordinate sn-glycerol 3-phosphate. The active-site Proton acceptor is the Lys189. Arg253 lines the NADPH pocket. NADPH-binding residues include Val277 and Glu279.

The protein belongs to the NAD-dependent glycerol-3-phosphate dehydrogenase family.

The protein resides in the cytoplasm. The enzyme catalyses sn-glycerol 3-phosphate + NAD(+) = dihydroxyacetone phosphate + NADH + H(+). It catalyses the reaction sn-glycerol 3-phosphate + NADP(+) = dihydroxyacetone phosphate + NADPH + H(+). Its pathway is membrane lipid metabolism; glycerophospholipid metabolism. Catalyzes the reduction of the glycolytic intermediate dihydroxyacetone phosphate (DHAP) to sn-glycerol 3-phosphate (G3P), the key precursor for phospholipid synthesis. This Moorella thermoacetica (strain ATCC 39073 / JCM 9320) protein is Glycerol-3-phosphate dehydrogenase [NAD(P)+].